We begin with the raw amino-acid sequence, 504 residues long: MNLFSALSLDTWVLLAIILVLLYRYGTRTHGLFKKQGIPGPKPLPFLGTVLNYYKGLWKFDMECYEKYGKTWGLFDGQMPLFVITDPEMIKNVLVKECFSVFTNRREFGPVGIMSKAISISKDEEWKRYRALLSPTFTSGKLKEMFPVIEQYGDILVKYLMQEAEKGKPVTMKDVLGAYSIDVITSTSFGVNVDSLNNPEDPFVEKAKGILRVDFFDPLVFSVVLFPFLTPVYEMLNICMFPKDSIEFFKKFVNRMKESRLDSKQKHRVDFLQLMMNAHNNSKDKDSHKALSDMEITAQSIVFIFAGYETTSSTLSFTLYCLATHPDIQKKLQEEIDETLPNKAPPTYDTVMEMEYLDMVLNETLRLYPIGNRLERFCKKDVELNGVYIPKGSTVMIPSYALHHDPQHWPEPEEFQPERFSKENKGSIDPYLYMPFGIGPRNCIGMRFAFMTMKLALTKVMQNFSFQPCQETQIPLKLSRQGLLQPEKPIVLKVVPRDVVITGA.

C443 contributes to the heme binding site.

Belongs to the cytochrome P450 family. Heme is required as a cofactor. In terms of tissue distribution, expressed in liver. Also expressed in the kidneys of female mice, with traces in the stomach, ovary, and heart of female mice and in the testis of male mice.

The protein localises to the endoplasmic reticulum membrane. It is found in the microsome membrane. The catalysed reaction is an organic molecule + reduced [NADPH--hemoprotein reductase] + O2 = an alcohol + oxidized [NADPH--hemoprotein reductase] + H2O + H(+). The chain is Cytochrome P450 3A41 (Cyp3a41a) from Mus musculus (Mouse).